The following is a 329-amino-acid chain: MFKWLLKHHNQPHSLQLGLLDQPLPFWKPFLLFLPALLTTILFTIIPFFLSLQKGFSANSDLYDLSSQSFSLRTFQDLFSESNFVLGLRNSFLYSLISLPFSIIIAIVIASAIVFVYKKLLRGFWQTVFFLPYVTSGVAISIAFVYIFDSASGILNTVFNVNTKWLDSGSRDTFNALWAILIFGVWKNLAFNVLIISTAMLSVNPQLYKVASLDSANPVRQFFKITLPSIRPTLIFLTTLLILGGMQVFPLALFENKPEEAVANGGNSILLYIFQQIQSGNTNLAGAATLVLFVLGVCYGLVLRNGFYLIEWLQWKIKQLYVQKQLTLY.

6 helical membrane passes run Phe30–Leu50, Leu96–Val116, Val128–Phe148, Ala176–Ile196, Leu234–Phe254, and Asn283–Leu303. The ABC transmembrane type-1 domain maps to Leu88–Leu303.

Belongs to the binding-protein-dependent transport system permease family. MalFG subfamily.

It is found in the cell membrane. Probably part of a binding-protein-dependent transport system. Probably responsible for the translocation of the substrate across the membrane. The chain is Probable ABC transporter permease protein MG188 from Mycoplasma genitalium (strain ATCC 33530 / DSM 19775 / NCTC 10195 / G37) (Mycoplasmoides genitalium).